Consider the following 407-residue polypeptide: MTYPNLLDRFLTYVKVNTRSDEHSTTTPSTQSQVDFATNVLIPEMKRVGLQNVYYLPNGFAIGTLPANDPSLTRKIGFISHMDTADFNAEGVNPQVIENYDGGVIELGNSGFKLDPADFKSLEKYPGQTLITTDGTSLLGADDKSGIAEIMTTIEYLTAHPEIKHCEIRVGFGPDEEIGVGANKFDAEDFDVDFAYTVDGGPLGELQYETFSAAGAELHFQGRNVHPGTAKGQMVNALQLAIDFHNQLPENDRPELTEGYQGFYHLMDVTGSVEEVRASYIIRDFEKDAFEARKASMQSIADKMNEELGSDRVTLNLTDQYYNMKEVIEKDMTPITIAKAVMEDLGITPIIEPIRGGTDGSKISFMGIPTPNIFAGGENMHGRFEYVSLQTMERAVDTIIGIVAYKG.

His-81 contributes to the Zn(2+) binding site. Asp-83 is a catalytic residue. Asp-142 is a binding site for Zn(2+). The active-site Proton acceptor is Glu-176. Glu-177, Asp-199, and His-381 together coordinate Zn(2+).

It belongs to the peptidase M20B family. Zn(2+) serves as cofactor.

It is found in the cytoplasm. It carries out the reaction Release of the N-terminal residue from a tripeptide.. In terms of biological role, cleaves the N-terminal amino acid of tripeptides. This chain is Peptidase T, found in Streptococcus pneumoniae (strain JJA).